Reading from the N-terminus, the 83-residue chain is MVVIRLARGGAKKRPFFNIVAADSRNRRDGRFIERVGYYNPVASGAEKGLVVNTERLAYWEQNGAQLSPTVARLVKQAAKAAA.

Belongs to the bacterial ribosomal protein bS16 family.

The polypeptide is Small ribosomal subunit protein bS16 (Azoarcus sp. (strain BH72)).